The following is a 228-amino-acid chain: Large ribosomal subunit protein uL3 (228 aa).

Gln151 is subject to N5-methylglutamine.

It belongs to the universal ribosomal protein uL3 family. As to quaternary structure, part of the 50S ribosomal subunit. Forms a cluster with proteins L14 and L19. In terms of processing, methylated by PrmB.

Functionally, one of the primary rRNA binding proteins, it binds directly near the 3'-end of the 23S rRNA, where it nucleates assembly of the 50S subunit. The sequence is that of Large ribosomal subunit protein uL3 from Rhizobium meliloti (strain 1021) (Ensifer meliloti).